A 200-amino-acid polypeptide reads, in one-letter code: MKKKAIFGGTFDPIHNGHLHIAYKALNRLKLDKIIFIPSGNPPHKHKECITDKNIRYNMVKYAIEQEDKFEISDYEVKKKGKSYTYETIEHFRKYHPNIDLYFIAGADCLMDIHKWKNIDSMMEKAKLVVFSRPGFSMDTILFQKKQVEEKFKKDIIFLDIPLLDVSSTEIREKIKKGEDIKDLIPEKTYNIIKKYGLYR.

It belongs to the NadD family.

It catalyses the reaction nicotinate beta-D-ribonucleotide + ATP + H(+) = deamido-NAD(+) + diphosphate. Its pathway is cofactor biosynthesis; NAD(+) biosynthesis; deamido-NAD(+) from nicotinate D-ribonucleotide: step 1/1. Catalyzes the reversible adenylation of nicotinate mononucleotide (NaMN) to nicotinic acid adenine dinucleotide (NaAD). This is Probable nicotinate-nucleotide adenylyltransferase from Clostridium tetani (strain Massachusetts / E88).